We begin with the raw amino-acid sequence, 445 residues long: UPF0210 protein Ccon26_06850 (445 aa).

Belongs to the UPF0210 family. In terms of assembly, homodimer.

This Campylobacter concisus (strain 13826) protein is UPF0210 protein Ccon26_06850.